Consider the following 96-residue polypeptide: Co-chaperonin GroES (96 aa).

The protein belongs to the GroES chaperonin family. As to quaternary structure, heptamer of 7 subunits arranged in a ring. Interacts with the chaperonin GroEL.

Its subcellular location is the cytoplasm. In terms of biological role, together with the chaperonin GroEL, plays an essential role in assisting protein folding. The GroEL-GroES system forms a nano-cage that allows encapsulation of the non-native substrate proteins and provides a physical environment optimized to promote and accelerate protein folding. GroES binds to the apical surface of the GroEL ring, thereby capping the opening of the GroEL channel. The chain is Co-chaperonin GroES from Cupriavidus necator (strain ATCC 17699 / DSM 428 / KCTC 22496 / NCIMB 10442 / H16 / Stanier 337) (Ralstonia eutropha).